Here is a 612-residue protein sequence, read N- to C-terminus: MTTQAPPTSLLPLSPEQLARLQAAVGEFSPTQMAWLSGYFWGMVNQQPGAVASPAVAAPPPVTVTLISASQTGNARRLAEQLRDDLLAAQLSVNLVNAGDYKFKQIAQERLLVVVASTQGEGEPAEEAVALHKFLFSKKAPKLSETAFAVFGLGDTSYEHFCQAGKDFDSKLAELGAQRLLDRVDADVEYQVQAQQWRQQVVATLQAKVPAQSTAPTQFIAPTQSTTPAAAAITSGGTTTVSPYSKTAPLTAQLSVQQKVTGRNSEKDVRHIEIDLGDSGLRYQPGDALGVWFDNDPALVEELLALLWLKGDEPVSIDGQNMPLAQALLSHLELTQNTTLIVDKYAALSRDETLIALLADKPALQLYAKNTPFVDMVRQAPSDLNADQLVGLLRPLTPRLYSIASSQAETENEVHITVGVVRYDIDGRARSGGASGYLADRLEVDGDIRVFIEHNDNFRLPANPETPVIMIGPGTGIAPFRAFMQQREVDGASGKNWLFFGNPHFTEDFLYQVEWQRYVKEGVLTRIDLAWSRDQAHKIYVQDKLREQGAELWNWIQQGAHIYVCGDANRMAKDVEQVLLDVVALHGAMDAEQADEYLSELRQARRYQRDVY.

In terms of domain architecture, Flavodoxin-like spans 64–202 (VTLISASQTG…QAQQWRQQVV (139 aa)). FMN-binding positions include 70 to 75 (SQTGNA), 117 to 120 (STQG), and 153 to 162 (LGDTSYEHFC). Residues 247–461 (TAPLTAQLSV…IEHNDNFRLP (215 aa)) form the FAD-binding FR-type domain. FAD is bound by residues Thr335, Lys369, 399–402 (RLYS), 417–419 (TVG), Tyr423, and 432–435 (GGAS). Residues 532–533 (SR), 538–542 (KIYVQ), and Asp574 each bind NADP(+). Tyr612 serves as a coordination point for FAD.

The protein belongs to the NADPH-dependent sulphite reductase flavoprotein subunit CysJ family. In the N-terminal section; belongs to the flavodoxin family. This sequence in the C-terminal section; belongs to the flavoprotein pyridine nucleotide cytochrome reductase family. In terms of assembly, alpha(8)-beta(8). The alpha component is a flavoprotein, the beta component is a hemoprotein. Requires FAD as cofactor. FMN is required as a cofactor.

The enzyme catalyses hydrogen sulfide + 3 NADP(+) + 3 H2O = sulfite + 3 NADPH + 4 H(+). The protein operates within sulfur metabolism; hydrogen sulfide biosynthesis; hydrogen sulfide from sulfite (NADPH route): step 1/1. Functionally, component of the sulfite reductase complex that catalyzes the 6-electron reduction of sulfite to sulfide. This is one of several activities required for the biosynthesis of L-cysteine from sulfate. The flavoprotein component catalyzes the electron flow from NADPH -&gt; FAD -&gt; FMN to the hemoprotein component. The sequence is that of Sulfite reductase [NADPH] flavoprotein alpha-component from Yersinia pestis bv. Antiqua (strain Nepal516).